Here is a 505-residue protein sequence, read N- to C-terminus: Ent-kaurene oxidase 2 (505 aa).

Residues 3–23 form a helical membrane-spanning segment; it reads AFVPGGAGAAAAAVGGFVAAA. Position 449 (Cys449) interacts with heme.

Belongs to the cytochrome P450 family. It depends on heme as a cofactor. In terms of tissue distribution, widely expressed.

Its subcellular location is the membrane. The enzyme catalyses ent-kaur-16-ene + 3 reduced [NADPH--hemoprotein reductase] + 3 O2 = ent-kaur-16-en-19-oate + 3 oxidized [NADPH--hemoprotein reductase] + 4 H2O + 4 H(+). It functions in the pathway plant hormone biosynthesis; gibberellin biosynthesis. Its function is as follows. Catalyzes three successive oxidations of the 4-methyl group of ent-kaurene giving kaurenoic acid, a key step in gibberellins (GAs) biosynthesis. GAs, which are involved many processes, including stem elongation, play a central role in plant development. The sequence is that of Ent-kaurene oxidase 2 from Oryza sativa subsp. japonica (Rice).